A 43-amino-acid chain; its full sequence is Bacteriocin weissellin-A (43 aa).

Cysteines 9 and 14 form a disulfide.

The protein localises to the secreted. Functionally, highly active against Gram-positive bacteria M.flavus strain ATCC 400, M.luteus strain CECT241, C.soprogenes strain NCTC533, L.monocytogenes strain ATCC 19111, L.inocua strain ATCC BAA-680D and S.carnosus strain LMG13564. Less active against B.cereus strain LMG13569, C.thiaminolyticum strain ATCC 15579, E.faecalis strain NCTC8176, L.lactis strain LM0230, L.casei strain ATCC 344, L.lactis strain IL1403, L.jensenii strain ATCC 25258, L.plantarum strain CECT220, L.brevis strain ATCC 8287, L.bulgaricus strain LMG13551, P.acidilactici strain ATCC 25740, P.pentosaceus strain ATCC 33316 and P.pentosaceus strain LMG13560. Weakly active against L.mesenteroides strain ATCC 19254, L.lactis strain ATCC 1454, L.sakei strain CECT906T, L.lactis subsp. cremoris strain MC1363 and L.curvatus strain ATCC 51436. Not active against Gram-negative bacterium S.enteritidis strain ATCC 13076. The mode of action appears to be non-lytic. Inactivated by proteinase K, but insensitive to trypsin, alpha-chymotrypsin, pepsin and papain. The polypeptide is Bacteriocin weissellin-A (Weissella paramesenteroides (Leuconostoc paramesenteroides)).